The following is a 471-amino-acid chain: MNRLFFSKIALWLLDFLTFNISFLLSLFVISYYHNGYEKYLPIYEIDDRTYIHAVLAGICVGWFAIRLRHYTYRKPFWFELKEIFRTLIIFAIFELAIVAFPKLYFSRYLWALTWGITFLLFPLARVLVKKFLIKSGWFLRDTIMIGSGDNAFDVYNALRDEPYLGFQVTHFISVSNISNNVKELNIPILNSMSSWTSVTKKTDQFIIALEDDEEVDRNNWLRYFSTNGYRSVSVIPTLRGLPLYNTDMSFMFSHEIMLLQMNNNLAKLSSRILKRTMDIVVGSLAIIIFSPVLLYLYFAVKKDGGNAIYGHPRIGRNGKTFNCLKFRTMAVNSKEVLDELLRTDPEARAEWEKDFKLKNDPRITKIGAFIRKTSLDELPQLFNVLKGEMSLVGPRPIVIDELERYEENVDYYLMARPGMTGLWQVSGRNNIDYNTRVYFDSWYVKNWSLWNDIAILFKTMNVVLNRDGAY.

4 helical membrane passes run 10-30, 46-66, 87-107, and 280-300; these read ALWL…LFVI, IDDR…WFAI, TLII…LYFS, and IVVG…LYFA.

It belongs to the bacterial sugar transferase family.

The protein resides in the cell membrane. Its pathway is glycan metabolism; exopolysaccharide biosynthesis. In terms of biological role, may function as a sugar transferase. This is an uncharacterized protein from Haemophilus influenzae (strain ATCC 51907 / DSM 11121 / KW20 / Rd).